The primary structure comprises 504 residues: Maturase K (504 aa).

The protein belongs to the intron maturase 2 family. MatK subfamily.

It localises to the plastid. The protein resides in the chloroplast. Functionally, usually encoded in the trnK tRNA gene intron. Probably assists in splicing its own and other chloroplast group II introns. In Eichhornia crassipes (Water hyacinth), this protein is Maturase K.